We begin with the raw amino-acid sequence, 591 residues long: Inactive metallocarboxypeptidase ECM14 (591 aa).

Residues 1 to 21 (MRLFAHLAVLAILACAVPITA) form the signal peptide. Residues 22-175 (IPSFLSNSYP…QTIYESYPSS (154 aa)) constitute a propeptide that is removed on maturation. In terms of domain architecture, Peptidase M14 spans 203-523 (DYQPFSVIVP…NAVMVLGRFL (321 aa)). Residues histidine 265 and glutamate 268 each contribute to the Zn(2+) site. Substrate is bound by residues 265 to 268 (HARE), arginine 323, and 340 to 341 (DR). The cysteines at positions 334 and 357 are disulfide-linked. N-linked (GlcNAc...) asparagine glycans are attached at residues asparagine 350, asparagine 381, and asparagine 386. Zn(2+) is bound at residue histidine 397. 398–399 (SY) serves as a coordination point for substrate. Residues 533-591 (DWEDESQRPKAGEDDIPSDNELDENDDSWIPYDYRNHDDQNEGEGYDNDEWGFRRRRKR) are disordered. Composition is skewed to acidic residues over residues 546–559 (DDIPSDNELDENDD) and 573–582 (NEGEGYDNDE).

Belongs to the peptidase M14 family. Requires Zn(2+) as cofactor.

The protein localises to the vacuole. Its subcellular location is the secreted. Its function is as follows. Inactive carboxypeptidase that may play a role in cell wall organization and biogenesis. The polypeptide is Inactive metallocarboxypeptidase ECM14 (ECM14) (Paracoccidioides brasiliensis (strain Pb03)).